A 369-amino-acid polypeptide reads, in one-letter code: Tetraacyldisaccharide 4'-kinase (369 aa).

Residue 52–59 coordinates ATP; the sequence is TVGGTGKT.

This sequence belongs to the LpxK family.

The catalysed reaction is a lipid A disaccharide + ATP = a lipid IVA + ADP + H(+). It participates in glycolipid biosynthesis; lipid IV(A) biosynthesis; lipid IV(A) from (3R)-3-hydroxytetradecanoyl-[acyl-carrier-protein] and UDP-N-acetyl-alpha-D-glucosamine: step 6/6. Transfers the gamma-phosphate of ATP to the 4'-position of a tetraacyldisaccharide 1-phosphate intermediate (termed DS-1-P) to form tetraacyldisaccharide 1,4'-bis-phosphate (lipid IVA). The sequence is that of Tetraacyldisaccharide 4'-kinase from Parabacteroides distasonis (strain ATCC 8503 / DSM 20701 / CIP 104284 / JCM 5825 / NCTC 11152).